The primary structure comprises 454 residues: UDP-N-acetylmuramoylalanine--D-glutamate ligase (454 aa).

An ATP-binding site is contributed by 119 to 125 (GSNGKTT).

Belongs to the MurCDEF family.

It is found in the cytoplasm. It catalyses the reaction UDP-N-acetyl-alpha-D-muramoyl-L-alanine + D-glutamate + ATP = UDP-N-acetyl-alpha-D-muramoyl-L-alanyl-D-glutamate + ADP + phosphate + H(+). Its pathway is cell wall biogenesis; peptidoglycan biosynthesis. Its function is as follows. Cell wall formation. Catalyzes the addition of glutamate to the nucleotide precursor UDP-N-acetylmuramoyl-L-alanine (UMA). The polypeptide is UDP-N-acetylmuramoylalanine--D-glutamate ligase (Latilactobacillus sakei subsp. sakei (strain 23K) (Lactobacillus sakei subsp. sakei)).